The sequence spans 68 residues: Large ribosomal subunit protein uL29 (68 aa).

Belongs to the universal ribosomal protein uL29 family.

The sequence is that of Large ribosomal subunit protein uL29 from Streptococcus sanguinis (strain SK36).